We begin with the raw amino-acid sequence, 518 residues long: Integrator complex subunit 14 (518 aa).

Positions 2-204 (PTVVVMDVSL…KNVQSMFGKL (203 aa)) constitute a VWFA domain. Mg(2+) is bound by residues Ser-10, Ser-12, and Thr-86. Lys-418 is subject to N6-acetyllysine.

The protein belongs to the Integrator subunit 14 family. In terms of assembly, component of the Integrator complex, composed of core subunits INTS1, INTS2, INTS3, INTS4, INTS5, INTS6, INTS7, INTS8, INTS9/RC74, INTS10, INTS11/CPSF3L, INTS12, INTS13, INTS14 and INTS15. The core complex associates with protein phosphatase 2A subunits PPP2CA and PPP2R1A, to form the Integrator-PP2A (INTAC) complex. INTS14 is part of the tail subcomplex, composed of INTS10, INTS13, INTS14 and INTS15.

The protein resides in the nucleus. Functionally, component of the integrator complex, a multiprotein complex that terminates RNA polymerase II (Pol II) transcription in the promoter-proximal region of genes. The integrator complex provides a quality checkpoint during transcription elongation by driving premature transcription termination of transcripts that are unfavorably configured for transcriptional elongation: the complex terminates transcription by (1) catalyzing dephosphorylation of the C-terminal domain (CTD) of Pol II subunit POLR2A/RPB1 and SUPT5H/SPT5, (2) degrading the exiting nascent RNA transcript via endonuclease activity and (3) promoting the release of Pol II from bound DNA. The integrator complex is also involved in terminating the synthesis of non-coding Pol II transcripts, such as enhancer RNAs (eRNAs), small nuclear RNAs (snRNAs), telomerase RNAs and long non-coding RNAs (lncRNAs). Within the integrator complex, INTS14 is part of the integrator tail module that acts as a platform for the recruitment of transcription factors at promoters. The chain is Integrator complex subunit 14 from Bos taurus (Bovine).